Consider the following 322-residue polypeptide: Nuclease 1, mitochondrial (322 aa).

The Proton acceptor role is filled by His142. Asn174 contacts Mg(2+).

It belongs to the DNA/RNA non-specific endonuclease family. As to quaternary structure, homodimer. The cofactor is Mn(2+). Requires Mg(2+) as cofactor.

The protein localises to the mitochondrion inner membrane. This enzyme has both RNase and DNase activity. It degrades single-stranded DNA and RNA. This is Nuclease 1, mitochondrial (pnu1) from Schizosaccharomyces pombe (strain 972 / ATCC 24843) (Fission yeast).